Here is a 418-residue protein sequence, read N- to C-terminus: Serine hydroxymethyltransferase (418 aa).

Residues Leu120 and 124–126 (GHL) contribute to the (6S)-5,6,7,8-tetrahydrofolate site. Lys229 is modified (N6-(pyridoxal phosphate)lysine). 353-355 (SPF) is a binding site for (6S)-5,6,7,8-tetrahydrofolate.

It belongs to the SHMT family. As to quaternary structure, homodimer. Requires pyridoxal 5'-phosphate as cofactor.

It localises to the cytoplasm. The catalysed reaction is (6R)-5,10-methylene-5,6,7,8-tetrahydrofolate + glycine + H2O = (6S)-5,6,7,8-tetrahydrofolate + L-serine. It participates in one-carbon metabolism; tetrahydrofolate interconversion. It functions in the pathway amino-acid biosynthesis; glycine biosynthesis; glycine from L-serine: step 1/1. Functionally, catalyzes the reversible interconversion of serine and glycine with tetrahydrofolate (THF) serving as the one-carbon carrier. This reaction serves as the major source of one-carbon groups required for the biosynthesis of purines, thymidylate, methionine, and other important biomolecules. Also exhibits THF-independent aldolase activity toward beta-hydroxyamino acids, producing glycine and aldehydes, via a retro-aldol mechanism. This is Serine hydroxymethyltransferase from Psychrobacter cryohalolentis (strain ATCC BAA-1226 / DSM 17306 / VKM B-2378 / K5).